The primary structure comprises 736 residues: Catalase-peroxidase (736 aa).

Residues 1 to 21 (MFKKTILSFVISAVMVTAASA) form the signal peptide. The tryptophyl-tyrosyl-methioninium (Trp-Tyr) (with M-250) cross-link spans 102-224 (WHAAGTYRTH…LAAVEMGLIY (123 aa)). Catalysis depends on H103, which acts as the Proton acceptor. Positions 224–250 (YVNPVGPHGNPDPLLAANDIRMSFGRM) form a cross-link, tryptophyl-tyrosyl-methioninium (Tyr-Met) (with W-102). Residue H265 coordinates heme b.

The protein belongs to the peroxidase family. Peroxidase/catalase subfamily. Homodimer or homotetramer. Heme b is required as a cofactor. Formation of the three residue Trp-Tyr-Met cross-link is important for the catalase, but not the peroxidase activity of the enzyme.

It catalyses the reaction H2O2 + AH2 = A + 2 H2O. The catalysed reaction is 2 H2O2 = O2 + 2 H2O. Functionally, bifunctional enzyme with both catalase and broad-spectrum peroxidase activity. The polypeptide is Catalase-peroxidase (Shewanella woodyi (strain ATCC 51908 / MS32)).